Reading from the N-terminus, the 361-residue chain is Biotin synthase (361 aa).

One can recognise a Radical SAM core domain in the interval 83-308 (PEVEVEGIIS…RTILRYAGGR (226 aa)). Positions 98, 102, and 105 each coordinate [4Fe-4S] cluster. Cysteine 141, cysteine 174, cysteine 233, and arginine 303 together coordinate [2Fe-2S] cluster.

This sequence belongs to the radical SAM superfamily. Biotin synthase family. Homodimer. [4Fe-4S] cluster serves as cofactor. It depends on [2Fe-2S] cluster as a cofactor.

It carries out the reaction (4R,5S)-dethiobiotin + (sulfur carrier)-SH + 2 reduced [2Fe-2S]-[ferredoxin] + 2 S-adenosyl-L-methionine = (sulfur carrier)-H + biotin + 2 5'-deoxyadenosine + 2 L-methionine + 2 oxidized [2Fe-2S]-[ferredoxin]. It participates in cofactor biosynthesis; biotin biosynthesis; biotin from 7,8-diaminononanoate: step 2/2. Its function is as follows. Catalyzes the conversion of dethiobiotin (DTB) to biotin by the insertion of a sulfur atom into dethiobiotin via a radical-based mechanism. The protein is Biotin synthase of Parafrankia sp. (strain EAN1pec).